The chain runs to 319 residues: Cytochrome f (319 aa).

Positions 1–34 are cleaved as a signal peptide; the sequence is MQNRNTYEWTKKMTRLISVLVMIHIITRTSISNA. Residues Tyr35, Cys55, Cys58, and His59 each contribute to the heme site. The helical transmembrane segment at 285–305 threads the bilayer; the sequence is VKGLLLFLASVILAQIFLVLK.

This sequence belongs to the cytochrome f family. As to quaternary structure, the 4 large subunits of the cytochrome b6-f complex are cytochrome b6, subunit IV (17 kDa polypeptide, petD), cytochrome f and the Rieske protein, while the 4 small subunits are PetG, PetL, PetM and PetN. The complex functions as a dimer. Requires heme as cofactor.

It localises to the plastid. The protein resides in the chloroplast thylakoid membrane. Its function is as follows. Component of the cytochrome b6-f complex, which mediates electron transfer between photosystem II (PSII) and photosystem I (PSI), cyclic electron flow around PSI, and state transitions. This Pinus koraiensis (Korean pine) protein is Cytochrome f.